The primary structure comprises 315 residues: Methylglutaconyl-CoA hydratase, mitochondrial (315 aa).

Residues 1–43 (MAAAAAPGALGALSAGRVRLVAACCARLGSAAWARGTAPRRGY) constitute a mitochondrion transit peptide. K76 bears the N6-acetyllysine; alternate mark. An N6-succinyllysine; alternate modification is found at K76. An RNA-binding region spans residues 81-95 (KNLLKMLSKAVDALK). K85 is modified (N6-succinyllysine). N6-acetyllysine; alternate is present on residues K89 and K120. An N6-succinyllysine; alternate mark is found at K89 and K120. 2 positions are modified to N6-succinyllysine: K124 and K136. 2 positions are modified to N6-acetyllysine; alternate: K180 and K187. N6-succinyllysine; alternate is present on residues K180 and K187. K305 bears the N6-succinyllysine mark.

The protein belongs to the enoyl-CoA hydratase/isomerase family. In terms of assembly, homohexamer.

The protein resides in the mitochondrion. It carries out the reaction (3S)-3-hydroxy-3-methylglutaryl-CoA = 3-methyl-(2E)-glutaconyl-CoA + H2O. It catalyses the reaction (3S)-citramalyl-CoA = itaconyl-CoA + H2O. The enzyme catalyses 3-hydroxyisovaleryl-CoA = 3-methylbut-2-enoyl-CoA + H2O. The catalysed reaction is (S)-3-hydroxyglutaryl-CoA = (2E)-glutaconyl-CoA + H2O. It functions in the pathway amino-acid degradation; L-leucine degradation; (S)-3-hydroxy-3-methylglutaryl-CoA from 3-isovaleryl-CoA: step 3/3. Functionally, catalyzes the fifth step in the leucine degradation pathway, the reversible hydration of 3-methylglutaconyl-CoA (3-MG-CoA) to 3-hydroxy-3-methylglutaryl-CoA (HMG-CoA). Can catalyze the reverse reaction but at a much lower rate in vitro. HMG-CoA is then quickly degraded by another enzyme (such as HMG-CoA lyase) to give acetyl-CoA and acetoacetate. Uses other substrates such as (2E)-glutaconyl-CoA efficiently in vitro, and to a lesser extent 3-methylcrotonyl-CoA (3-methyl-(2E)-butenoyl-CoA), crotonyl-CoA ((2E)-butenoyl-CoA) and 3-hydroxybutanoyl-CoA (the missing carboxylate reduces affinity to the active site). Originally it was identified as an RNA-binding protein as it binds to AU-rich elements (AREs) in vitro. AREs direct rapid RNA degradation and mRNA deadenylation. Might have itaconyl-CoA hydratase activity, converting itaconyl-CoA into citramalyl-CoA in the C5-dicarboxylate catabolism pathway. The C5-dicarboxylate catabolism pathway is required to detoxify itaconate, an antimicrobial metabolite and immunomodulator produced by macrophages during certain infections, that can act as a vitamin B12-poisoning metabolite. The polypeptide is Methylglutaconyl-CoA hydratase, mitochondrial (Rattus norvegicus (Rat)).